Consider the following 236-residue polypeptide: NAD-dependent protein deacetylase (236 aa).

Residues 1–236 enclose the Deacetylase sirtuin-type domain; that stretch reads MIKDWLQESN…EFLRSISNEG (236 aa). NAD(+) is bound by residues A18, T22, F29, R30, Q96, V98, D99, and H114. F29 is a binding site for nicotinamide. Nicotinamide-binding residues include V98 and D99. H114 acts as the Proton acceptor in catalysis. Positions 122, 125, 141, and 143 each coordinate Zn(2+). NAD(+) is bound by residues S181, S182, N206, and I225.

This sequence belongs to the sirtuin family. Class U subfamily. Requires Zn(2+) as cofactor.

It is found in the cytoplasm. The enzyme catalyses N(6)-acetyl-L-lysyl-[protein] + NAD(+) + H2O = 2''-O-acetyl-ADP-D-ribose + nicotinamide + L-lysyl-[protein]. NAD-dependent protein deacetylase which modulates the activities of several enzymes which are inactive in their acetylated form. The polypeptide is NAD-dependent protein deacetylase (Oceanobacillus iheyensis (strain DSM 14371 / CIP 107618 / JCM 11309 / KCTC 3954 / HTE831)).